The following is a 39-amino-acid chain: Photosystem I reaction center subunit IX (39 aa).

The chain crosses the membrane as a helical span at residues 7–27 (FLTTAPVAFILFSSFVFALFI).

The protein belongs to the PsaJ family.

The protein localises to the cellular thylakoid membrane. Its function is as follows. May help in the organization of the PsaE and PsaF subunits. The chain is Photosystem I reaction center subunit IX from Synechococcus sp. (strain JA-2-3B'a(2-13)) (Cyanobacteria bacterium Yellowstone B-Prime).